A 287-amino-acid chain; its full sequence is Protein PXR1 (287 aa).

One can recognise a G-patch domain in the interval 25–72 (TSRFGHLQLEKFGWKPGMGLGMSPTSSHKTHIKVSIKDDNLGLGAKIK). The segment covering 143 to 155 (LKSYSNDKKRSRD) has biased composition (basic and acidic residues). The tract at residues 143 to 254 (LKSYSNDKKR…TTASNIPSTV (112 aa)) is disordered. The span at 163–190 (SKNKSKKQKKDKKDKKDKKDKKDKKDKK) shows a compositional bias: basic residues. The segment covering 191–200 (DKKDKTEKKE) has biased composition (basic and acidic residues). Over residues 201-220 (KKEKKEKKEKKEKKDKKDKK) the composition is skewed to basic residues. Residues 221–230 (DKKDKIDKKD) show a composition bias toward basic and acidic residues. Over residues 239-251 (NNIEVSTTASNIP) the composition is skewed to polar residues.

This sequence belongs to the PINX1 family.

Its subcellular location is the nucleus. It localises to the nucleolus. Functionally, involved in rRNA-processing at A0, A1 and A2 sites and negatively regulates telomerase. This Vanderwaltozyma polyspora (strain ATCC 22028 / DSM 70294 / BCRC 21397 / CBS 2163 / NBRC 10782 / NRRL Y-8283 / UCD 57-17) (Kluyveromyces polysporus) protein is Protein PXR1 (PXR1).